The sequence spans 147 residues: Hemoglobin subunit beta (147 aa).

Position 2 is an N-acetylvaline (Val-2). Residues 3–147 enclose the Globin domain; it reads HLSAEEKGLV…VATALAHKYH (145 aa). Thr-13 carries the phosphothreonine modification. Position 45 is a phosphoserine (Ser-45). Lys-60 carries the post-translational modification N6-acetyllysine. Heme b is bound at residue His-64. The residue at position 83 (Lys-83) is an N6-acetyllysine. His-93 lines the heme b pocket. S-nitrosocysteine is present on Cys-94. Lys-145 is subject to N6-acetyllysine.

It belongs to the globin family. Heterotetramer of two alpha chains and two beta chains. As to expression, red blood cells.

Involved in oxygen transport from the lung to the various peripheral tissues. In Scapanus orarius (Coast mole), this protein is Hemoglobin subunit beta (HBB).